We begin with the raw amino-acid sequence, 60 residues long: Large ribosomal subunit protein bL32 (60 aa).

It belongs to the bacterial ribosomal protein bL32 family.

This is Large ribosomal subunit protein bL32 from Streptococcus gordonii (strain Challis / ATCC 35105 / BCRC 15272 / CH1 / DL1 / V288).